The following is a 347-amino-acid chain: MNPSIFIILLTTLILGTMMVITSSHWLLAWIGFEMNMMAFIPIMMKNPSPRATEASTKYLLTQATASALLMMAVIINLMYSGQWTITKLFNPTASTLMTVALAIKLGLAPFHFWVPEVTQGIPLTTGLILLTWQKLAPLSILYQISPSINLYLMLTMSLLSILVGGWGGLNQTQLRKIMAYSSIAHMGWMTTILPYNPTLTLLNLLIYITMTFTMFMLFIQNSTTTTLSLSQTWNKTPIITTLTMLTLLSMGGLPPLSGFMPKWMIIQELTKNDILIMPTFMAITALLNLYFYMRLTYSTALTLFPSTNNMKMKWQFSPTKRAPLLPTAIVISTMLLPLTPMLSILL.

The next 10 membrane-spanning stretches (helical) occupy residues 1–21 (MNPS…MMVI), 25–45 (HWLL…PIMM), 59–79 (YLLT…INLM), 96–116 (TLMT…FWVP), 122–142 (IPLT…LSIL), 149–169 (INLY…GWGG), 200–220 (LTLL…MLFI), 239–259 (IITT…PLSG), 274–294 (DILI…YFYM), and 325–345 (LLPT…MLSI).

Belongs to the complex I subunit 2 family. As to quaternary structure, core subunit of respiratory chain NADH dehydrogenase (Complex I) which is composed of 45 different subunits. Interacts with TMEM242.

It is found in the mitochondrion inner membrane. It carries out the reaction a ubiquinone + NADH + 5 H(+)(in) = a ubiquinol + NAD(+) + 4 H(+)(out). Functionally, core subunit of the mitochondrial membrane respiratory chain NADH dehydrogenase (Complex I) which catalyzes electron transfer from NADH through the respiratory chain, using ubiquinone as an electron acceptor. Essential for the catalytic activity and assembly of complex I. The chain is NADH-ubiquinone oxidoreductase chain 2 from Balaenoptera musculus (Blue whale).